The following is a 292-amino-acid chain: Ubiquinone biosynthesis protein UbiV (292 aa).

Residues Cys39, Cys180, Cys193, and Cys197 each contribute to the [4Fe-4S] cluster site.

The protein belongs to the peptidase U32 family. UbiV subfamily. In terms of assembly, forms a heterodimer with UbiU. Requires [4Fe-4S] cluster as cofactor.

It functions in the pathway cofactor biosynthesis; ubiquinone biosynthesis. Required for O(2)-independent ubiquinone (coenzyme Q) biosynthesis. Together with UbiU, is essential for the C6-hydroxylation reaction in the oxygen-independent ubiquinone biosynthesis pathway. This chain is Ubiquinone biosynthesis protein UbiV, found in Escherichia coli (strain K12).